We begin with the raw amino-acid sequence, 143 residues long: Nucleoside diphosphate kinase (143 aa).

The ATP site is built by K11, F59, R87, T93, R104, and N114. H117 functions as the Pros-phosphohistidine intermediate in the catalytic mechanism.

The protein belongs to the NDK family. In terms of assembly, homotetramer. Requires Mg(2+) as cofactor.

The protein localises to the cytoplasm. It catalyses the reaction a 2'-deoxyribonucleoside 5'-diphosphate + ATP = a 2'-deoxyribonucleoside 5'-triphosphate + ADP. The catalysed reaction is a ribonucleoside 5'-diphosphate + ATP = a ribonucleoside 5'-triphosphate + ADP. Major role in the synthesis of nucleoside triphosphates other than ATP. The ATP gamma phosphate is transferred to the NDP beta phosphate via a ping-pong mechanism, using a phosphorylated active-site intermediate. The chain is Nucleoside diphosphate kinase from Ectopseudomonas mendocina (strain ymp) (Pseudomonas mendocina).